The sequence spans 442 residues: Thymidine phosphorylase (442 aa).

Belongs to the thymidine/pyrimidine-nucleoside phosphorylase family. Homodimer.

The catalysed reaction is thymidine + phosphate = 2-deoxy-alpha-D-ribose 1-phosphate + thymine. The protein operates within pyrimidine metabolism; dTMP biosynthesis via salvage pathway; dTMP from thymine: step 1/2. Functionally, the enzymes which catalyze the reversible phosphorolysis of pyrimidine nucleosides are involved in the degradation of these compounds and in their utilization as carbon and energy sources, or in the rescue of pyrimidine bases for nucleotide synthesis. This is Thymidine phosphorylase from Pectobacterium atrosepticum (strain SCRI 1043 / ATCC BAA-672) (Erwinia carotovora subsp. atroseptica).